Reading from the N-terminus, the 204-residue chain is Large ribosomal subunit protein bL25 (204 aa).

It belongs to the bacterial ribosomal protein bL25 family. CTC subfamily. As to quaternary structure, part of the 50S ribosomal subunit; part of the 5S rRNA/L5/L18/L25 subcomplex. Contacts the 5S rRNA. Binds to the 5S rRNA independently of L5 and L18.

In terms of biological role, this is one of the proteins that binds to the 5S RNA in the ribosome where it forms part of the central protuberance. The sequence is that of Large ribosomal subunit protein bL25 from Pseudomonas paraeruginosa (strain DSM 24068 / PA7) (Pseudomonas aeruginosa (strain PA7)).